The primary structure comprises 104 residues: ATP-dependent Clp protease adapter protein ClpS (104 aa).

It belongs to the ClpS family. As to quaternary structure, binds to the N-terminal domain of the chaperone ClpA.

Its function is as follows. Involved in the modulation of the specificity of the ClpAP-mediated ATP-dependent protein degradation. This Bordetella avium (strain 197N) protein is ATP-dependent Clp protease adapter protein ClpS.